Here is a 310-residue protein sequence, read N- to C-terminus: Protein BIG GRAIN 1 (310 aa).

A disordered region spans residues 77-140; sequence SYRARAPGPH…EKKAKKPGAS (64 aa). Residues 90 to 106 are compositionally biased toward low complexity; sequence SSSSECSSYGGFSSSEA.

It belongs to the BIG GRAIN 1 (BG1) plant protein family. In terms of tissue distribution, mostly expressed in the vascular tissues of leaves, culms and young panicles, especially in hulls.

Its subcellular location is the cell membrane. Its function is as follows. Involved in auxin transport. Positive regulator of the auxin signaling pathway involved in gravitropism, plant growth and grain development. The protein is Protein BIG GRAIN 1 of Oryza sativa subsp. japonica (Rice).